We begin with the raw amino-acid sequence, 255 residues long: Electron transfer flavoprotein subunit beta (255 aa).

An N-acetylalanine modification is found at Ala-2. AMP is bound by residues Ala-9, 39-42, Cys-66, and 123-134; these read NPFC and GKQAIDDDCNQT. Positions 183-205 are recognition loop; sequence ADLRLNEPRYATLPNIMKAKKKK. The residue at position 200 (Lys-200) is an N6,N6,N6-trimethyllysine; by ETFBKMT; alternate. An N6-acetyllysine; alternate modification is found at Lys-200. Residue Lys-200 is modified to N6-methyllysine; alternate. The residue at position 203 (Lys-203) is an N6,N6,N6-trimethyllysine; by ETFBKMT. Lys-210 is modified (N6-acetyllysine; alternate). Position 210 is an N6-succinyllysine; alternate (Lys-210). 2 positions are modified to phosphoserine: Ser-223 and Ser-226. Lys-238 bears the N6-acetyllysine mark. Lys-248 is subject to N6-acetyllysine; alternate. Position 248 is an N6-succinyllysine; alternate (Lys-248).

It belongs to the ETF beta-subunit/FixA family. As to quaternary structure, heterodimer composed of ETFA and ETFB. Identified in a complex that contains ETFA, ETFB and ETFRF1. Interacts with ACADM. Methylated. Trimethylation at Lys-200 and Lys-203 may negatively regulate the activity in electron transfer from acyl-CoA dehydrogenases.

The protein localises to the mitochondrion matrix. Its function is as follows. Heterodimeric electron transfer flavoprotein that accepts electrons from several mitochondrial dehydrogenases, including acyl-CoA dehydrogenases, glutaryl-CoA and sarcosine dehydrogenase. It transfers the electrons to the main mitochondrial respiratory chain via ETF-ubiquinone oxidoreductase. Required for normal mitochondrial fatty acid oxidation and normal amino acid metabolism. ETFB binds an AMP molecule that probably has a purely structural role. The polypeptide is Electron transfer flavoprotein subunit beta (Bos taurus (Bovine)).